The sequence spans 474 residues: Kynureninase 2 (474 aa).

Pyridoxal 5'-phosphate is bound by residues leucine 144, threonine 145, 172 to 175 (FPSD), aspartate 258, histidine 261, and tyrosine 283. N6-(pyridoxal phosphate)lysine is present on lysine 284. Tryptophan 323 and threonine 351 together coordinate pyridoxal 5'-phosphate.

This sequence belongs to the kynureninase family. Homodimer. Pyridoxal 5'-phosphate is required as a cofactor.

The protein resides in the cytoplasm. It catalyses the reaction L-kynurenine + H2O = anthranilate + L-alanine + H(+). The enzyme catalyses 3-hydroxy-L-kynurenine + H2O = 3-hydroxyanthranilate + L-alanine + H(+). The protein operates within amino-acid degradation; L-kynurenine degradation; L-alanine and anthranilate from L-kynurenine: step 1/1. It functions in the pathway cofactor biosynthesis; NAD(+) biosynthesis; quinolinate from L-kynurenine: step 2/3. Its function is as follows. Catalyzes the cleavage of L-kynurenine (L-Kyn) and L-3-hydroxykynurenine (L-3OHKyn) into anthranilic acid (AA) and 3-hydroxyanthranilic acid (3-OHAA), respectively. The protein is Kynureninase 2 (bna5-2) of Emericella nidulans (strain FGSC A4 / ATCC 38163 / CBS 112.46 / NRRL 194 / M139) (Aspergillus nidulans).